Here is a 2068-residue protein sequence, read N- to C-terminus: Lipoxygenase homology domain-containing protein 1 (2068 aa).

PLAT domains lie at 43–160 (KVYE…RDLL), 172–287 (NKYE…RDIL), 296–412 (ITYI…RQLY), 425–540 (YPWS…REMT), 553–673 (ARYR…RELL), 684–803 (FRYH…VELY), 814–934 (VHYE…RELL), 970–1088 (TTFS…RDLF), 1101–1226 (VPYE…RELV), 1255–1373 (VLYS…RLFY), 1422–1540 (IPYY…RVFD), 1553–1668 (VLYE…CEIC), 1680–1798 (TSYT…RDFA), 1811–1932 (TTYE…VFEV), and 1949–2065 (VKYE…RELF).

In terms of tissue distribution, expressed in the inner ear, specifically in hair cells. Higher expression is detected in the cochlea.

Its subcellular location is the cell projection. It localises to the stereocilium. In terms of biological role, required for normal function of hair cells in the inner ear. This is Lipoxygenase homology domain-containing protein 1 (Loxhd1) from Mus musculus (Mouse).